Reading from the N-terminus, the 334-residue chain is HTH-type transcriptional repressor PurR (334 aa).

Residues 2–56 (ATIKDVARLAGVSTTTVSHVINKTRFVAEATQEKVMKAVDELNYAPSAVARSLKC) form the HTH lacI-type domain. A DNA-binding region (H-T-H motif) is located at residues 4–23 (IKDVARLAGVSTTTVSHVIN). A DNA-binding region spans residues 48 to 56 (SAVARSLKC). Residues F73, K189, F220, and D274 each contribute to the hypoxanthine site.

In terms of assembly, homodimer.

It participates in purine metabolism; purine nucleotide biosynthesis [regulation]. Its function is as follows. Is the main repressor of the genes involved in the de novo synthesis of purine nucleotides, regulating purB, purC, purEK, purF, purHD, purL, purMN and guaBA expression. PurR is allosterically activated to bind its cognate DNA by binding the purine corepressors, hypoxanthine or guanine, thereby effecting transcription repression. This is HTH-type transcriptional repressor PurR from Vibrio parahaemolyticus serotype O3:K6 (strain RIMD 2210633).